A 548-amino-acid chain; its full sequence is 2-succinyl-5-enolpyruvyl-6-hydroxy-3-cyclohexene-1-carboxylate synthase (548 aa).

This sequence belongs to the TPP enzyme family. MenD subfamily. Homodimer. The cofactor is Mg(2+). Requires Mn(2+) as cofactor. Thiamine diphosphate is required as a cofactor.

It catalyses the reaction isochorismate + 2-oxoglutarate + H(+) = 5-enolpyruvoyl-6-hydroxy-2-succinyl-cyclohex-3-ene-1-carboxylate + CO2. Its pathway is quinol/quinone metabolism; 1,4-dihydroxy-2-naphthoate biosynthesis; 1,4-dihydroxy-2-naphthoate from chorismate: step 2/7. The protein operates within quinol/quinone metabolism; menaquinone biosynthesis. In terms of biological role, catalyzes the thiamine diphosphate-dependent decarboxylation of 2-oxoglutarate and the subsequent addition of the resulting succinic semialdehyde-thiamine pyrophosphate anion to isochorismate to yield 2-succinyl-5-enolpyruvyl-6-hydroxy-3-cyclohexene-1-carboxylate (SEPHCHC). This Mycolicibacterium vanbaalenii (strain DSM 7251 / JCM 13017 / BCRC 16820 / KCTC 9966 / NRRL B-24157 / PYR-1) (Mycobacterium vanbaalenii) protein is 2-succinyl-5-enolpyruvyl-6-hydroxy-3-cyclohexene-1-carboxylate synthase.